Reading from the N-terminus, the 402-residue chain is Dual-specificity RNA methyltransferase RlmN (402 aa).

Glu94 (proton acceptor) is an active-site residue. The Radical SAM core domain maps to 100–351 (EDDRGTLCIS…ATVRKTRGDD (252 aa)). A disulfide bridge links Cys107 with Cys356. [4Fe-4S] cluster is bound by residues Cys114, Cys118, and Cys121. S-adenosyl-L-methionine contacts are provided by residues 182–183 (GE), Ser214, 236–238 (SLH), and Asn313. The active-site S-methylcysteine intermediate is the Cys356.

It belongs to the radical SAM superfamily. RlmN family. [4Fe-4S] cluster is required as a cofactor.

The protein resides in the cytoplasm. It carries out the reaction adenosine(2503) in 23S rRNA + 2 reduced [2Fe-2S]-[ferredoxin] + 2 S-adenosyl-L-methionine = 2-methyladenosine(2503) in 23S rRNA + 5'-deoxyadenosine + L-methionine + 2 oxidized [2Fe-2S]-[ferredoxin] + S-adenosyl-L-homocysteine. The enzyme catalyses adenosine(37) in tRNA + 2 reduced [2Fe-2S]-[ferredoxin] + 2 S-adenosyl-L-methionine = 2-methyladenosine(37) in tRNA + 5'-deoxyadenosine + L-methionine + 2 oxidized [2Fe-2S]-[ferredoxin] + S-adenosyl-L-homocysteine. Specifically methylates position 2 of adenine 2503 in 23S rRNA and position 2 of adenine 37 in tRNAs. m2A2503 modification seems to play a crucial role in the proofreading step occurring at the peptidyl transferase center and thus would serve to optimize ribosomal fidelity. The polypeptide is Dual-specificity RNA methyltransferase RlmN (Polynucleobacter asymbioticus (strain DSM 18221 / CIP 109841 / QLW-P1DMWA-1) (Polynucleobacter necessarius subsp. asymbioticus)).